A 362-amino-acid chain; its full sequence is GDSL esterase/lipase At5g45670 (362 aa).

A signal peptide spans 1 to 23 (MARMSLMIMMIMVAVTMINIAKS). The active-site Nucleophile is the S36. Residues D326 and H329 contribute to the active site.

Belongs to the 'GDSL' lipolytic enzyme family.

It is found in the secreted. The protein is GDSL esterase/lipase At5g45670 of Arabidopsis thaliana (Mouse-ear cress).